The following is a 136-amino-acid chain: Large-conductance mechanosensitive channel (136 aa).

Helical transmembrane passes span A9–F29 and I79–I99.

It belongs to the MscL family. In terms of assembly, homopentamer.

Its subcellular location is the cell inner membrane. Its function is as follows. Channel that opens in response to stretch forces in the membrane lipid bilayer. May participate in the regulation of osmotic pressure changes within the cell. The polypeptide is Large-conductance mechanosensitive channel (Shewanella baltica (strain OS223)).